Consider the following 507-residue polypeptide: Arylsulfatase A (507 aa).

Positions 1–18 (MEALWTLTLALAAGLAAA) are cleaved as a signal peptide. Ca(2+)-binding residues include aspartate 29, aspartate 30, and cysteine 69. Cysteine 69 acts as the Nucleophile in catalysis. The residue at position 69 (cysteine 69) is a 3-oxoalanine (Cys). Lysine 123 is a substrate binding site. The active site involves histidine 125. A substrate-binding site is contributed by serine 150. 2 disulfides stabilise this stretch: cysteine 156-cysteine 172 and cysteine 161-cysteine 168. A glycan (N-linked (GlcNAc...) asparagine) is linked at asparagine 158. Asparagine 184 carries an N-linked (GlcNAc...) asparagine glycan. Histidine 229 is a binding site for substrate. Ca(2+) contacts are provided by aspartate 281 and asparagine 282. 4 disulfide bridges follow: cysteine 300-cysteine 414, cysteine 488-cysteine 500, cysteine 489-cysteine 502, and cysteine 493-cysteine 499. Lysine 302 serves as a coordination point for substrate. An N-linked (GlcNAc...) asparagine glycan is attached at asparagine 350.

This sequence belongs to the sulfatase family. In terms of assembly, homodimer at neutral pH and homooctamer at acidic pH. Exists both as a single chain of 58 kDa (component A) or as a chain of 50 kDa (component B) linked by disulfide bond(s) to a 7 kDa chain (component C). Interacts with SUMF1. The cofactor is Ca(2+). The conversion to 3-oxoalanine (also known as C-formylglycine, FGly), of a serine or cysteine residue in prokaryotes and of a cysteine residue in eukaryotes, is critical for catalytic activity. This post-translational modification is severely defective in multiple sulfatase deficiency (MSD).

Its subcellular location is the endoplasmic reticulum. The protein resides in the lysosome. It carries out the reaction an N-acyl-1-beta-D-(3-O-sulfo)-galactosyl-sphing-4-enine + H2O = a beta-D-galactosyl-(1&lt;-&gt;1')-N-acylsphing-4-enine + sulfate + H(+). Functionally, hydrolyzes cerebroside sulfate. The chain is Arylsulfatase A (ARSA) from Bos taurus (Bovine).